We begin with the raw amino-acid sequence, 513 residues long: ATP synthase subunit alpha (513 aa).

An ATP-binding site is contributed by 169–176; that stretch reads GDRQTGKT.

The protein belongs to the ATPase alpha/beta chains family. F-type ATPases have 2 components, CF(1) - the catalytic core - and CF(0) - the membrane proton channel. CF(1) has five subunits: alpha(3), beta(3), gamma(1), delta(1), epsilon(1). CF(0) has three main subunits: a(1), b(2) and c(9-12). The alpha and beta chains form an alternating ring which encloses part of the gamma chain. CF(1) is attached to CF(0) by a central stalk formed by the gamma and epsilon chains, while a peripheral stalk is formed by the delta and b chains.

Its subcellular location is the cell inner membrane. It carries out the reaction ATP + H2O + 4 H(+)(in) = ADP + phosphate + 5 H(+)(out). Its function is as follows. Produces ATP from ADP in the presence of a proton gradient across the membrane. The alpha chain is a regulatory subunit. The chain is ATP synthase subunit alpha from Idiomarina loihiensis (strain ATCC BAA-735 / DSM 15497 / L2-TR).